The sequence spans 342 residues: Ferrochelatase (342 aa).

Residues His-188 and Glu-268 each contribute to the Fe cation site.

The protein belongs to the ferrochelatase family.

The protein localises to the cytoplasm. The catalysed reaction is heme b + 2 H(+) = protoporphyrin IX + Fe(2+). Its pathway is porphyrin-containing compound metabolism; protoheme biosynthesis; protoheme from protoporphyrin-IX: step 1/1. In terms of biological role, catalyzes the ferrous insertion into protoporphyrin IX. In Rickettsia typhi (strain ATCC VR-144 / Wilmington), this protein is Ferrochelatase.